Consider the following 189-residue polypeptide: Small heat shock protein 21 (189 aa).

The segment at 26–53 is disordered; it reads PPNFNPRKIAQGDNGKGQQVSRYGAGAG. The sHSP domain occupies 77–183; sequence KYFVGFDDNV…HEKIVNIPIS (107 aa).

The protein belongs to the small heat shock protein (HSP20) family.

Its function is as follows. Heat shock protein required for pathogenicity. Mediates thermotolerance and adaptation to oxidative stress and ethanol-induced stress. Required for invasive growth and filament formation under various filament inducing conditions. Plays a role in the capacity of damaging human-derived endothelial and oral epithelial cells during infection. Potentiates resistance to antifungal drugs, as well as resistance to killing by human neutrophils. Plays a major role in trehalose homeostasis in response to elevated temperatures. Regulates CEK1 activation by phosphorylation in response to elevated temperatures. The chain is Small heat shock protein 21 (HSP21) from Candida albicans (strain SC5314 / ATCC MYA-2876) (Yeast).